A 61-amino-acid chain; its full sequence is Tryptophyllin-T1 (61 aa).

Positions 1–22 are cleaved as a signal peptide; the sequence is MDFLKKSLFLVLFLGLVSISLC. The propeptide occupies 23 to 53; it reads DEEKRQDDDEASEREEKKEIHEEGNQEERRD. A disordered region spans residues 25–61; that stretch reads EKRQDDDEASEREEKKEIHEEGNQEERRDRPPSWIPK. Residues 36–55 are compositionally biased toward basic and acidic residues; sequence REEKKEIHEEGNQEERRDRP. Position 56 is a 4-hydroxyproline; partial (Pro56).

Belongs to the frog skin active peptide (FSAP) family. Tryptophillin subfamily. As to expression, expressed by the skin glands.

Its subcellular location is the secreted. The polypeptide is Tryptophyllin-T1 (Pithecopus azureus (Orange-legged monkey tree frog)).